An 85-amino-acid polypeptide reads, in one-letter code: Protein AC4 (85 aa).

Residue Gly-2 is the site of N-myristoyl glycine; by host attachment.

It belongs to the geminiviridae protein AC4/C4 family. Interacts with Arabidopsis thaliana ASK7/ASK-eta and ASK6/ASK-zeta proteins. Phosphorylated by Arabidopsis thaliana ASK7/ASK-eta mainly on threonine and serine residues.

It is found in the host cell membrane. Its function is as follows. Pathogenicity determinant. May act as a suppressor of RNA-mediated gene silencing, also known as post-transcriptional gene silencing (PTGS), a mechanism of plant viral defense that limits the accumulation of viral RNAs. May repress the AL61 promoter. This is Protein AC4 from Solanum lycopersicum (Tomato).